A 323-amino-acid chain; its full sequence is Acetyl-coenzyme A carboxylase carboxyl transferase subunit alpha (323 aa).

A CoA carboxyltransferase C-terminal domain is found at Arg39–Gln293.

It belongs to the AccA family. Acetyl-CoA carboxylase is a heterohexamer composed of biotin carboxyl carrier protein (AccB), biotin carboxylase (AccC) and two subunits each of ACCase subunit alpha (AccA) and ACCase subunit beta (AccD).

The protein resides in the cytoplasm. It carries out the reaction N(6)-carboxybiotinyl-L-lysyl-[protein] + acetyl-CoA = N(6)-biotinyl-L-lysyl-[protein] + malonyl-CoA. It functions in the pathway lipid metabolism; malonyl-CoA biosynthesis; malonyl-CoA from acetyl-CoA: step 1/1. Functionally, component of the acetyl coenzyme A carboxylase (ACC) complex. First, biotin carboxylase catalyzes the carboxylation of biotin on its carrier protein (BCCP) and then the CO(2) group is transferred by the carboxyltransferase to acetyl-CoA to form malonyl-CoA. In Burkholderia vietnamiensis (strain G4 / LMG 22486) (Burkholderia cepacia (strain R1808)), this protein is Acetyl-coenzyme A carboxylase carboxyl transferase subunit alpha.